Consider the following 235-residue polypeptide: Large ribosomal subunit protein uL1 (235 aa).

The protein belongs to the universal ribosomal protein uL1 family. Part of the 50S ribosomal subunit.

Its function is as follows. Binds directly to 23S rRNA. The L1 stalk is quite mobile in the ribosome, and is involved in E site tRNA release. Functionally, protein L1 is also a translational repressor protein, it controls the translation of the L11 operon by binding to its mRNA. This Lawsonia intracellularis (strain PHE/MN1-00) protein is Large ribosomal subunit protein uL1.